The primary structure comprises 144 residues: Flagellar assembly factor FliW (144 aa).

Belongs to the FliW family. As to quaternary structure, interacts with translational regulator CsrA and flagellin(s).

The protein localises to the cytoplasm. In terms of biological role, acts as an anti-CsrA protein, binds CsrA and prevents it from repressing translation of its target genes, one of which is flagellin. Binds to flagellin and participates in the assembly of the flagellum. The sequence is that of Flagellar assembly factor FliW from Geobacillus sp. (strain WCH70).